Consider the following 503-residue polypeptide: MAKALPIMFQGTHSDAGKSVIATAFCRMFAQDGWKTAPFKSQNMSLNSYVTPDGNEIGRAQGIQAEAAGVAARAEMNPILIKPSREHESQIVVLGKPYGNMQAFAYRNEFFHQGLAVIRQSLETLMNEYDRIVIEGAGSPAEVNLNDRELVNMRIARLANAPVVLIGDIERGGVFASLVGTLSLLEPEDRKRVIGVIINKFRGDVALLKPGLDWFEQHTGVPVLGVVPYLPDLAIDAEDSLSLERFASSVGGEEAIDVAVIRCPKIANFTDIDPLLAEPDCRVRLVTHGDELGAPDVIVLPGSKNTIEDLIYMKKRGLASRIVSLVNEGKARVVGLCGGYQMLGAVIRDPYGVETPLPEVKGLGLLPIETTLERTKITIRTEGMLTWAGERFSVQGYEIHMGRSAPLPGYAPLIEADGRHEGAKHSDERVLGTYMHDLFHNDAFRTAFFNNIRRQKGIAPSGVRLFRSLKEKAFDRLAAHVRQHVAVERIEQMMRQFGCRDHS.

A GATase cobBQ-type domain is found at 255 to 444; it reads AIDVAVIRCP…MHDLFHNDAF (190 aa). The active-site Nucleophile is the Cys-337. His-436 is a catalytic residue.

It belongs to the CobB/CobQ family. CobQ subfamily.

Its pathway is cofactor biosynthesis; adenosylcobalamin biosynthesis. Catalyzes amidations at positions B, D, E, and G on adenosylcobyrinic A,C-diamide. NH(2) groups are provided by glutamine, and one molecule of ATP is hydrogenolyzed for each amidation. The protein is Cobyric acid synthase of Geobacillus kaustophilus (strain HTA426).